We begin with the raw amino-acid sequence, 100 residues long: MREKEFSKSTHRLKVTKEMDIGTLLNRAHKVSTFDGKNLIVLDNGNLYDQAGRREVPVTNMFRYIKSVRNSDGIVIAKKNKPCGKLMQVIFERKAKQKVK.

This is an uncharacterized protein from Bacillus anthracis.